The sequence spans 2549 residues: Serine/threonine-protein kinase mTOR (2549 aa).

Methionine 1 bears the N-acetylmethionine mark. The segment at 1-651 is interaction with NBN; that stretch reads MLGTGPATAT…HVVSQTAVQV (651 aa). HEAT repeat units follow at residues 16–53, 55–99, 100–137, 138–179, 180–220, 222–276, 277–313, 314–364, 365–409, 410–445, 446–494, 495–529, 530–563, 564–596, 597–636, 637–683, 686–724, 727–766, 769–811, 814–853, 857–893, 894–942, 943–988, 989–1027, 1029–1068, 1069–1105, 1106–1144, 1145–1188, 1189–1225, 1226–1273, 1274–1311, and 1312–1345; these read SSNV…MELR, MSQE…VEGG, NSTR…AMAG, DTFT…AISV, PTFF…LILT, QREP…RISS, MEGE…PRHI, TPFT…CCRD, LMEE…AFTD, TQYL…VAVR, SEFK…RAMG, PGIQ…RQIP, QLKK…GLAH, QLAS…EFEG, HSLT…SIHL, ISGH…DERF, HLAQ…MNPA, MPFL…NAPR, RPYM…VSGL, RKWV…STGY, PYRK…LLGA, LDPY…GNLP, LDEF…KCVQ, FLPQ…KSHI, PYMD…GEFK, LYLP…LFGA, NLDD…RLTE, SLDF…GKKY, QIFI…LADE, EEDP…GAAR, RVSK…QAYN, and PMAR…ELAL. Serine 567 bears the Phosphoserine mark. Phosphothreonine is present on threonine 1162. An N6-acetyllysine modification is found at lysine 1218. Residue serine 1261 is modified to Phosphoserine. TPR repeat units lie at residues 1346-1382, 1383-1408, 1409-1442, 1443-1473, 1474-1507, 1508-1541, 1542-1574, 1575-1614, 1615-1649, 1650-1693, 1694-1731, 1732-1786, 1787-1846, 1898-1930, 1931-1970, and 1971-2005; these read TSQD…GIVL, LGER…QKGP, TPAI…HFGE, LEIQ…NKDD, PELM…VNDE, TQAK…RDTH, DGAF…LDAE, LTAM…RREI, IRQI…PHED, MRTW…PTVH, PQVT…AQHA, IATE…DRSW, YKAW…STEG, NNLQ…VKAI, QIDT…YHPQ, and ALIY…SNTL. The FAT domain maps to 1382–1982; it reads LLGERAAKCR…IYPLTVASKS (601 aa). Residues lysine 1662, lysine 1702, and arginine 1749 each coordinate 1D-myo-inositol hexakisphosphate. The disordered stretch occupies residues 1812-1867; sequence DEKKKLRHASGANITNATTTATTAASAAAATSTEGSNSESEAESNESSPTPSPLQK. The span at 1826–1860 shows a compositional bias: low complexity; that stretch reads TNATTTATTAASAAAATSTEGSNSESEAESNESSP. Positions 2012–2144 are sufficient for interaction with the FKBP1A/rapamycin complex; it reads VSEELIRVAI…DLELAVPGTY (133 aa). Lysine 2066 participates in a covalent cross-link: Glycyl lysine isopeptide (Lys-Gly) (interchain with G-Cter in ubiquitin). In terms of domain architecture, PI3K/PI4K catalytic spans 2156–2469; that stretch reads IAPSLQVITS…GVELGEPAHK (314 aa). Serine 2159 bears the Phosphoserine mark. The segment at 2162–2168 is G-loop; sequence VITSKQR. A Phosphothreonine modification is found at threonine 2164. Residues serine 2165 and glutamine 2167 each coordinate ATP. The residue at position 2173 (threonine 2173) is a Phosphothreonine; by PKB/AKT1. Leucine 2185, lysine 2187, glutamate 2190, tyrosine 2225, glycine 2238, tryptophan 2239, valine 2240, and threonine 2245 together coordinate ATP. Residues 2258 to 2296 are interaction with MLST8; the sequence is KILLNIEHRIMLRMAPDYDHLTLMQKVEVFEHAVNNTAG. The catalytic loop stretch occupies residues 2335-2343; the sequence is GLGDRHPSN. Residue asparagine 2343 coordinates Mg(2+). ATP is bound by residues methionine 2345 and isoleucine 2356. The tract at residues 2355–2380 is activation loop; the sequence is HIDFGDCFEVAMTREKFPEKIPFRLT. Residue aspartate 2357 coordinates Mg(2+). Threonine 2446 bears the Phosphothreonine; by RPS6KB1 mark. Serine 2448 is subject to Phosphoserine; by RPS6KB1. At serine 2478 the chain carries Phosphoserine. Position 2481 is a phosphoserine; by autocatalysis (serine 2481). In terms of domain architecture, FATC spans 2517–2549; the sequence is DTLDVPTQVELLIKQATSHENLCQCYIGWCPFW.

The protein belongs to the PI3/PI4-kinase family. In terms of assembly, part of the mechanistic target of rapamycin complex 1 (mTORC1) which contains MTOR, MLST8 and RPTOR. The mTORC1 complex is a 1 Md obligate dimer of two stoichiometric heterotetramers with overall dimensions of 290 A x 210 A x 135 A. It has a rhomboid shape and a central cavity, the dimeric interfaces are formed by interlocking interactions between the two MTOR and the two RPTOR subunits. The MLST8 subunit forms distal foot-like protuberances, and contacts only one MTOR within the complex, while the small AKT1S1/PRAS40 localizes to the midsection of the central core, in close proximity to RPTOR. mTORC1 associates with AKT1S1/PRAS40, which inhibits its activity by blocking MTOR substrate-recruitment site. Component of the mechanistic target of rapamycin complex 2 (mTORC2), consisting in two heterotretramers composed of MTOR, MLST8, RICTOR and MAPKAP1/SIN1. Interacts with PLPP7 and PML. Interacts with PRR5 and RICTOR; the interaction is direct within the mTORC2 complex and interaction with RICTOR is enhanced by deubiquitination of RICTOR by USP9X. mTORC1 and mTORC2 associate with DEPTOR, which regulates their activity. Interacts with WAC; WAC positively regulates MTOR activity by promoting the assembly of the TTT complex composed of TELO2, TTI1 and TTI2 and the RUVBL complex composed of RUVBL1 and RUVBL2 into the TTT-RUVBL complex which leads to the dimerization of the mTORC1 complex and its subsequent activation. Interacts with UBQLN1. Interacts with TTI1 and TELO2. Interacts with CLIP1; phosphorylates and regulates CLIP1. Interacts with NBN. Interacts with HTR6. Interacts with BRAT1. Interacts with MEAK7 (via C-terminal domain); the interaction increases upon nutrient stimulation. Interacts with TM4SF5; the interaction is positively regulated by arginine and is negatively regulated by leucine. Interacts with GPR137B. Interacts with NCKAP1L. Interacts with TPCN1 and TPCN2; the interaction is required for TPCN1 and TPCN2 sensitivity to ATP. Interacts with ATP6V1A and with CRYAB, forming a ternary complex. Interacts with SLC38A7; this interaction mediates the recruitment of mTORC1 to the lysosome and its subsequent activation. Interacts with TSPAN8. Autophosphorylates when part of mTORC1 or mTORC2. Phosphorylation at Ser-1261, Ser-2159 and Thr-2164 promotes autophosphorylation. Phosphorylated at Ser-2448 by RPS6KB1. Phosphorylation in the kinase domain modulates the interactions of MTOR with RPTOR and AKT1S1/PRAS40 and leads to increased intrinsic mTORC1 kinase activity. Phosphorylation at Ser-2159 by TBK1 in response to growth factors and pathogen recognition receptors promotes mTORC1 activity. Phosphorylation at Ser-2159 by TBK1 in response to EGF growth factor promotes mTORC2 activity, leading to AKT1 phosphorylation and activation. Phosphorylation at Thr-2173 in the ATP-binding region by AKT1 strongly reduces kinase activity. In terms of processing, ubiquitinated at Lys-2066 by the SCF(FBXO22) complex via 'Lys-27'-linked ubiquitination prevents mTORC1 substrate recruitment.

It localises to the lysosome membrane. Its subcellular location is the endoplasmic reticulum membrane. The protein localises to the golgi apparatus membrane. It is found in the cell membrane. The protein resides in the mitochondrion outer membrane. It localises to the cytoplasm. Its subcellular location is the nucleus. The protein localises to the PML body. It is found in the microsome membrane. The protein resides in the cytoplasmic vesicle. It localises to the phagosome. The catalysed reaction is L-seryl-[protein] + ATP = O-phospho-L-seryl-[protein] + ADP + H(+). It carries out the reaction L-threonyl-[protein] + ATP = O-phospho-L-threonyl-[protein] + ADP + H(+). The enzyme catalyses L-tyrosyl-[protein] + ATP = O-phospho-L-tyrosyl-[protein] + ADP + H(+). With respect to regulation, the mTORC1 complex is activated in response to nutrients, growth factors or amino acids: activation requires relocalization of the mTORC1 complex to lysosomes that is mediated by the Ragulator complex, SLC38A9, and the Rag GTPases RagA/RRAGA, RagB/RRAGB, RagC/RRAGC and RagD/RRAGD. Activation of mTORC1 by growth factors such as insulin involves AKT1-mediated phosphorylation of TSC1-TSC2, which leads to the activation of the RHEB GTPase a potent activator of the protein kinase activity of mTORC1. Insulin-stimulated and amino acid-dependent phosphorylation at Ser-1261 promotes autophosphorylation and the activation of mTORC1. On the other hand, low cellular energy levels can inhibit mTORC1 through activation of PRKAA1 while hypoxia inhibits mTORC1 through a REDD1-dependent mechanism which may also require PRKAA1. The kinase activity of MTOR within the mTORC1 complex is positively regulated by MLST8. The kinase activity of MTOR is inhibited by DEPTOR and AKT1S1. The non-canonical mTORC1 complex is independent of the RHEB GTPase and specifically mediates phosphorylation of MiT/TFE factors TFEB and TFE3 but not other mTORC1 substrates: it is activated by FLCN, which activates Rag GTPases RagC/RRAGC and RagD/RRAGD. MTOR is the target of the immunosuppressive and anti-cancer drug rapamycin which acts in complex with FKBP1A/FKBP12, and specifically inhibits its kinase activity. mTORC2 is also activated by growth factors, but seems to be nutrient-insensitive. mTORC2 associates and is directly activated by ribosomes. mTORC2 may also be regulated by RHEB but in an indirect manner through the PI3K signaling pathway. Its function is as follows. Serine/threonine protein kinase which is a central regulator of cellular metabolism, growth and survival in response to hormones, growth factors, nutrients, energy and stress signals. MTOR directly or indirectly regulates the phosphorylation of at least 800 proteins. Functions as part of 2 structurally and functionally distinct signaling complexes mTORC1 and mTORC2 (mTOR complex 1 and 2). In response to nutrients, growth factors or amino acids, mTORC1 is recruited to the lysosome membrane and promotes protein, lipid and nucleotide synthesis by phosphorylating key regulators of mRNA translation and ribosome synthesis. This includes phosphorylation of EIF4EBP1 and release of its inhibition toward the elongation initiation factor 4E (eiF4E). Moreover, phosphorylates and activates RPS6KB1 and RPS6KB2 that promote protein synthesis by modulating the activity of their downstream targets including ribosomal protein S6, eukaryotic translation initiation factor EIF4B, and the inhibitor of translation initiation PDCD4. Stimulates the pyrimidine biosynthesis pathway, both by acute regulation through RPS6KB1-mediated phosphorylation of the biosynthetic enzyme CAD, and delayed regulation, through transcriptional enhancement of the pentose phosphate pathway which produces 5-phosphoribosyl-1-pyrophosphate (PRPP), an allosteric activator of CAD at a later step in synthesis, this function is dependent on the mTORC1 complex. Regulates ribosome synthesis by activating RNA polymerase III-dependent transcription through phosphorylation and inhibition of MAF1 an RNA polymerase III-repressor. Activates dormant ribosomes by mediating phosphorylation of SERBP1, leading to SERBP1 inactivation and reactivation of translation. In parallel to protein synthesis, also regulates lipid synthesis through SREBF1/SREBP1 and LPIN1. To maintain energy homeostasis mTORC1 may also regulate mitochondrial biogenesis through regulation of PPARGC1A. In the same time, mTORC1 inhibits catabolic pathways: negatively regulates autophagy through phosphorylation of ULK1. Under nutrient sufficiency, phosphorylates ULK1 at 'Ser-758', disrupting the interaction with AMPK and preventing activation of ULK1. Also prevents autophagy through phosphorylation of the autophagy inhibitor DAP. Also prevents autophagy by phosphorylating RUBCNL/Pacer under nutrient-rich conditions. Prevents autophagy by mediating phosphorylation of AMBRA1, thereby inhibiting AMBRA1 ability to mediate ubiquitination of ULK1 and interaction between AMBRA1 and PPP2CA. mTORC1 exerts a feedback control on upstream growth factor signaling that includes phosphorylation and activation of GRB10 a INSR-dependent signaling suppressor. Among other potential targets mTORC1 may phosphorylate CLIP1 and regulate microtubules. The mTORC1 complex is inhibited in response to starvation and amino acid depletion. The non-canonical mTORC1 complex, which acts independently of RHEB, specifically mediates phosphorylation of MiT/TFE factors TFEB and TFE3 in the presence of nutrients, promoting their cytosolic retention and inactivation. Upon starvation or lysosomal stress, inhibition of mTORC1 induces dephosphorylation and nuclear translocation of TFEB and TFE3, promoting their transcription factor activity. The mTORC1 complex regulates pyroptosis in macrophages by promoting GSDMD oligomerization. MTOR phosphorylates RPTOR which in turn inhibits mTORC1. As part of the mTORC2 complex, MTOR transduces signals from growth factors to pathways involved in proliferation, cytoskeletal organization, lipogenesis and anabolic output. In response to growth factors, mTORC2 phosphorylates and activates AGC protein kinase family members, including AKT (AKT1, AKT2 and AKT3), PKC (PRKCA, PRKCB and PRKCE) and SGK1. In contrast to mTORC1, mTORC2 is nutrient-insensitive. mTORC2 plays a critical role in AKT1 activation by mediating phosphorylation of different sites depending on the context, such as 'Thr-450', 'Ser-473', 'Ser-477' or 'Thr-479', facilitating the phosphorylation of the activation loop of AKT1 on 'Thr-308' by PDPK1/PDK1 which is a prerequisite for full activation. mTORC2 also regulates the phosphorylation of SGK1 at 'Ser-422'. mTORC2 may regulate the actin cytoskeleton, through phosphorylation of PRKCA, PXN and activation of the Rho-type guanine nucleotide exchange factors RHOA and RAC1A or RAC1B. The mTORC2 complex also phosphorylates various proteins involved in insulin signaling, such as FBXW8 and IGF2BP1. May also regulate insulin signaling by acting as a tyrosine protein kinase that catalyzes phosphorylation of IGF1R and INSR. Regulates osteoclastogenesis by adjusting the expression of CEBPB isoforms. Plays an important regulatory role in the circadian clock function; regulates period length and rhythm amplitude of the suprachiasmatic nucleus (SCN) and liver clocks. The chain is Serine/threonine-protein kinase mTOR from Rattus norvegicus (Rat).